Here is a 249-residue protein sequence, read N- to C-terminus: Triosephosphate isomerase (249 aa).

9 to 11 (NWK) contacts substrate. His94 functions as the Electrophile in the catalytic mechanism. The active-site Proton acceptor is the Glu166. Substrate is bound by residues Gly172, Ser212, and 233–234 (GG).

This sequence belongs to the triosephosphate isomerase family. As to quaternary structure, homodimer.

The protein localises to the cytoplasm. It carries out the reaction D-glyceraldehyde 3-phosphate = dihydroxyacetone phosphate. It participates in carbohydrate biosynthesis; gluconeogenesis. The protein operates within carbohydrate degradation; glycolysis; D-glyceraldehyde 3-phosphate from glycerone phosphate: step 1/1. Its function is as follows. Involved in the gluconeogenesis. Catalyzes stereospecifically the conversion of dihydroxyacetone phosphate (DHAP) to D-glyceraldehyde-3-phosphate (G3P). In Treponema pallidum (strain Nichols), this protein is Triosephosphate isomerase.